The following is a 339-amino-acid chain: tRNA N6-adenosine threonylcarbamoyltransferase (339 aa).

2 residues coordinate Fe cation: histidine 111 and histidine 115. Residues 134–138 (VVSGG), aspartate 167, glycine 180, and asparagine 279 contribute to the substrate site. Aspartate 307 is a Fe cation binding site.

It belongs to the KAE1 / TsaD family. Fe(2+) serves as cofactor.

It is found in the cytoplasm. It catalyses the reaction L-threonylcarbamoyladenylate + adenosine(37) in tRNA = N(6)-L-threonylcarbamoyladenosine(37) in tRNA + AMP + H(+). Required for the formation of a threonylcarbamoyl group on adenosine at position 37 (t(6)A37) in tRNAs that read codons beginning with adenine. Is involved in the transfer of the threonylcarbamoyl moiety of threonylcarbamoyl-AMP (TC-AMP) to the N6 group of A37, together with TsaE and TsaB. TsaD likely plays a direct catalytic role in this reaction. The sequence is that of tRNA N6-adenosine threonylcarbamoyltransferase from Syntrophobacter fumaroxidans (strain DSM 10017 / MPOB).